We begin with the raw amino-acid sequence, 160 residues long: CXXC motif containing zinc binding protein (160 aa).

Zn(2+) contacts are provided by Cys33, Cys36, Cys67, and Cys70. Ser75 carries the phosphoserine modification.

Belongs to the UPF0587 family. In terms of assembly, monomer.

This is CXXC motif containing zinc binding protein from Rattus norvegicus (Rat).